Consider the following 278-residue polypeptide: 2-dehydro-3-deoxyphosphooctonate aldolase (278 aa).

The protein belongs to the KdsA family.

The protein localises to the cytoplasm. The catalysed reaction is D-arabinose 5-phosphate + phosphoenolpyruvate + H2O = 3-deoxy-alpha-D-manno-2-octulosonate-8-phosphate + phosphate. The protein operates within carbohydrate biosynthesis; 3-deoxy-D-manno-octulosonate biosynthesis; 3-deoxy-D-manno-octulosonate from D-ribulose 5-phosphate: step 2/3. It functions in the pathway bacterial outer membrane biogenesis; lipopolysaccharide biosynthesis. The sequence is that of 2-dehydro-3-deoxyphosphooctonate aldolase from Fusobacterium nucleatum subsp. nucleatum (strain ATCC 25586 / DSM 15643 / BCRC 10681 / CIP 101130 / JCM 8532 / KCTC 2640 / LMG 13131 / VPI 4355).